The following is a 147-amino-acid chain: Probable WRKY transcription factor 45 (147 aa).

The disordered stretch occupies residues 21-52; it reads TEFHGVDNSAQPTTSSEEKPRSKKKKKEREAR. Positions 59–124 form a DNA-binding region, WRKY; sequence SQVDILDDGY…YQGVHTHAVD (66 aa). Positions 90, 95, 119, and 121 each coordinate Zn(2+).

This sequence belongs to the WRKY group I family.

It is found in the nucleus. Its function is as follows. Transcription factor. Interacts specifically with the W box (5'-(T)TGAC[CT]-3'), a frequently occurring elicitor-responsive cis-acting element. This chain is Probable WRKY transcription factor 45 (WRKY45), found in Arabidopsis thaliana (Mouse-ear cress).